An 843-amino-acid chain; its full sequence is Vacuolar membrane protease (843 aa).

Over 1-16 the chain is Cytoplasmic; the sequence is MTNSRRHIFERICAKA. A helical transmembrane segment spans residues 17 to 37; that stretch reads FQSSLTCSIFGFTVLLILYLL. At 38–347 the chain is on the vacuolar side; the sequence is DWKRIAQVPG…LAFGKYWQLN (310 aa). 3 N-linked (GlcNAc...) asparagine glycosylation sites follow: Asn-96, Asn-109, and Asn-117. Residues His-147 and Asp-159 each contribute to the Zn(2+) site. Glu-191 serves as the catalytic Proton acceptor. Position 192 (Glu-192) interacts with Zn(2+). Asn-209 carries an N-linked (GlcNAc...) asparagine glycan. Glu-217 lines the Zn(2+) pocket. An N-linked (GlcNAc...) asparagine glycan is attached at Asn-275. Residue His-292 coordinates Zn(2+). An N-linked (GlcNAc...) asparagine glycan is attached at Asn-322. The helical transmembrane segment at 348–368 threads the bilayer; sequence LPIYQVLNIIFAVICPIVLLL. The Cytoplasmic portion of the chain corresponds to 369–386; that stretch reads TLIRFPSLYEQLKKPRYT. A helical membrane pass occupies residues 387 to 407; that stretch reads VCFVVSCIFVSIFDTLTVLLL. The Vacuolar portion of the chain corresponds to 408–417; the sequence is TWINPYVINS. Residues 418-438 traverse the membrane as a helical segment; sequence HTGLILALFYLTNLIALAFSF. Topologically, residues 439-456 are cytoplasmic; it reads RAAATHSKLSSEDLSSIE. The chain crosses the membrane as a helical span at residues 457 to 477; it reads IVFIWYAQILWYLVFIVSVIL. Residues 478–484 lie on the Vacuolar side of the membrane; it reads SIYFQLG. A helical membrane pass occupies residues 485–505; that stretch reads STYWVTLSYLCTFTCCIMTII. At 506-566 the chain is on the cytoplasmic side; that stretch reads RINYFVDNVV…NRAHVKLIDN (61 aa). A helical membrane pass occupies residues 567–587; it reads IWTVIYFIFNVPFPVFLCYDI. At 588–608 the chain is on the vacuolar side; the sequence is LVETILPAGSQTLTDSVFSSK. The chain crosses the membrane as a helical span at residues 609–629; that stretch reads LYKLVIFVVFLSLVNSGPFIF. The Cytoplasmic portion of the chain corresponds to 630–636; it reads RALSKKS. Residues 637 to 657 form a helical membrane-spanning segment; the sequence is LAVLTMLWITLFVQALSVNPF. The Vacuolar portion of the chain corresponds to 658-843; it reads TESAPLKLSF…LLKVKSSIVI (186 aa). Asn-677, Asn-703, Asn-707, Asn-754, and Asn-788 each carry an N-linked (GlcNAc...) asparagine glycan.

Belongs to the peptidase M28 family. Zn(2+) serves as cofactor.

It is found in the membrane. The protein localises to the vacuole membrane. May be involved in vacuolar sorting and osmoregulation. The sequence is that of Vacuolar membrane protease from Schizosaccharomyces pombe (strain 972 / ATCC 24843) (Fission yeast).